The primary structure comprises 187 residues: Nuclear transcription factor Y subunit C-8 (187 aa).

The segment at 163–187 (WPGAWTSVSGEEEEARGKKGGDDGN) is disordered. Positions 177-187 (ARGKKGGDDGN) are enriched in basic and acidic residues.

The protein belongs to the NFYC/HAP5 subunit family. As to quaternary structure, heterotrimeric transcription factor composed of three components, NF-YA, NF-YB and NF-YC. NF-YB and NF-YC must interact and dimerize for NF-YA association and DNA binding. In terms of tissue distribution, expressed in flowers and siliques.

The protein localises to the nucleus. In terms of biological role, stimulates the transcription of various genes by recognizing and binding to a CCAAT motif in promoters. This Arabidopsis thaliana (Mouse-ear cress) protein is Nuclear transcription factor Y subunit C-8 (NFYC8).